Consider the following 315-residue polypeptide: Tyrosine recombinase XerC (315 aa).

In terms of domain architecture, Core-binding (CB) spans 1-103 (MITSFYAFLD…AIKSFARFCV (103 aa)). A Tyr recombinase domain is found at 124–306 (ELPSPLTYEQ…SMKLKKQIHD (183 aa)). Active-site residues include Arg164, Lys188, His258, Arg261, and His284. Tyr293 acts as the O-(3'-phospho-DNA)-tyrosine intermediate in catalysis.

It belongs to the 'phage' integrase family. XerC subfamily. As to quaternary structure, forms a cyclic heterotetrameric complex composed of two molecules of XerC and two molecules of XerD.

Its subcellular location is the cytoplasm. Functionally, site-specific tyrosine recombinase, which acts by catalyzing the cutting and rejoining of the recombining DNA molecules. The XerC-XerD complex is essential to convert dimers of the bacterial chromosome into monomers to permit their segregation at cell division. It also contributes to the segregational stability of plasmids. The chain is Tyrosine recombinase XerC from Chlamydia trachomatis serovar L2b (strain UCH-1/proctitis).